Consider the following 224-residue polypeptide: 7-cyano-7-deazaguanine synthase (224 aa).

ATP is bound at residue 10–20 (LSGGLDSATVV). Positions 189, 199, 202, and 205 each coordinate Zn(2+).

Belongs to the QueC family. Zn(2+) serves as cofactor.

It carries out the reaction 7-carboxy-7-deazaguanine + NH4(+) + ATP = 7-cyano-7-deazaguanine + ADP + phosphate + H2O + H(+). Its pathway is purine metabolism; 7-cyano-7-deazaguanine biosynthesis. Functionally, catalyzes the ATP-dependent conversion of 7-carboxy-7-deazaguanine (CDG) to 7-cyano-7-deazaguanine (preQ(0)). The polypeptide is 7-cyano-7-deazaguanine synthase (Pseudomonas aeruginosa (strain LESB58)).